Consider the following 1032-residue polypeptide: Putative oxidoreductase YgfK (1032 aa).

The 4Fe-4S ferredoxin-type domain occupies 928-958; that stretch reads RFQTLHLDAYCNECGNCAQFCPWNGKPYKDK. Positions 938, 941, 944, and 948 each coordinate [4Fe-4S] cluster.

[4Fe-4S] cluster is required as a cofactor.

Functionally, could be an iron-sulfur flavoprotein with NADPH:O(2) oxidoreductase activity. The sequence is that of Putative oxidoreductase YgfK (ygfK) from Escherichia coli (strain K12).